The primary structure comprises 345 residues: Tryptophan--tRNA ligase (345 aa).

ATP-binding positions include 12 to 14 and 20 to 21; these read RPT and GH. The 'HIGH' region motif lies at 13-21; sequence PTGKLHLGH. Residue D144 coordinates L-tryptophan. ATP-binding positions include 156-158, L194, and 202-206; these read GKD and KMSKS. The 'KMSKS' region motif lies at 202–206; it reads KMSKS.

The protein belongs to the class-I aminoacyl-tRNA synthetase family. In terms of assembly, homodimer.

It is found in the cytoplasm. It catalyses the reaction tRNA(Trp) + L-tryptophan + ATP = L-tryptophyl-tRNA(Trp) + AMP + diphosphate + H(+). Functionally, catalyzes the attachment of tryptophan to tRNA(Trp). This is Tryptophan--tRNA ligase from Chlamydia caviae (strain ATCC VR-813 / DSM 19441 / 03DC25 / GPIC) (Chlamydophila caviae).